The sequence spans 551 residues: MSQFVGFGVQVELKDGKLIQGKIAKATSKGLTLNDVQFGDGGKSQAFKVRASRLKDLKVLTVASQSGKRKQQRQQQQQNDYNQNRGEHIDWQDDDVSKIKQQEDFDFQRNLGMFNKKDVFAQLKQNDDILPENRLQGHNRKQTQLQQNNYQNDELVIPDAKKDSWNKISSRNEQSTHQSQPQQDAQDDLVLEDDEHEYDVDDIDDPKYLPITQSLNITHLIHSATNSPSINDKTKGTVINDKDQVLAKLGQMIISQSRSNSTSLPAANKQTTIRSKNTKQNIPMATPVQLLEMESITSEFFSINSAGLLENFAVNASFFLKQKLGGRARLRLQNSNPEPLVVILASDSNRSGAKALALGRHLCQTGHIRVITLFTCSQNELQDSMVKKQTDIYKKCGGKIVNSVSSLESAMETLNSPVEIVIDAMQGYDCTLSDLAGTSEVIESRIKSMISWCNKQRGSTKVWSLDIPNGFDAGSGMPDIFFSDRIEATGIICSGWPLIAINNLIANLPSLEDAVLIDIGIPQGAYSQRTSLRKFQNCDLFVTDGSLLLDL.

The region spanning 1-63 (MSQFVGFGVQ…LKDLKVLTVA (63 aa)) is the Sm domain. Residues 64–92 (SQSGKRKQQRQQQQQNDYNQNRGEHIDWQ) are disordered. In terms of domain architecture, DFDF spans 93–129 (DDDVSKIKQQEDFDFQRNLGMFNKKDVFAQLKQNDDI). Phosphoserine is present on residues serine 257 and serine 261. The YjeF N-terminal domain occupies 288–527 (VQLLEMESIT…DIGIPQGAYS (240 aa)).

It belongs to the EDC3 family. As to quaternary structure, homodimer. Interacts with DCP2.

The protein resides in the cytoplasm. It is found in the P-body. Its function is as follows. Stimulates decapping of both stable and unstable mRNA during mRNA decay. Does not affect nonsense-mediated mRNA decay. Required for normal P-body assembly. This Saccharomyces cerevisiae (strain ATCC 204508 / S288c) (Baker's yeast) protein is Enhancer of mRNA-decapping protein 3 (EDC3).